The following is a 163-amino-acid chain: Probable chemoreceptor glutamine deamidase CheD (163 aa).

This sequence belongs to the CheD family.

The catalysed reaction is L-glutaminyl-[protein] + H2O = L-glutamyl-[protein] + NH4(+). In terms of biological role, probably deamidates glutamine residues to glutamate on methyl-accepting chemotaxis receptors (MCPs), playing an important role in chemotaxis. The sequence is that of Probable chemoreceptor glutamine deamidase CheD from Pyrococcus abyssi (strain GE5 / Orsay).